Consider the following 128-residue polypeptide: Saitohin (128 aa).

A compositionally biased stretch (polar residues) spans 77–87; sequence SYSSEENSRNG. A disordered region spans residues 77-128; it reads SYSSEENSRNGAEQGRQLSIEGPFQGQNCPSHPAAALPLPMRGESQATSCQV.

Interacts with PRDX6.

It localises to the cytoplasm. The protein localises to the nucleus. This Pan troglodytes (Chimpanzee) protein is Saitohin (STH).